The primary structure comprises 860 residues: Nucleolar MIF4G domain-containing protein 1 (860 aa).

Disordered stretches follow at residues 1 to 172 (MAAS…AARK), 191 to 211 (RCLG…PLSF), and 226 to 339 (GKNS…EKYI). Residues 1-269 (MAASRSAGEA…EEEEEGDVEK (269 aa)) form a necessary for nucleolar localization and for targeting PPP1CA to the nucleolus region. The span at 20–31 (VRMKRRGGRGPR) shows a compositional bias: basic residues. A Phosphoserine modification is found at S57. The segment covering 77–99 (GGRKSRKELRKEKRHLRKARRLQ) has biased composition (basic residues). Basic and acidic residues predominate over residues 115–131 (GAEEASGHRQDTEERAR). Residue S139 is modified to Phosphoserine. Residues 142-151 (RKPRPSRVKA) are compositionally biased toward basic residues. Residues 152 to 169 (KATAATAKTRPSAAATAA) show a composition bias toward low complexity. Acidic residues-rich tracts occupy residues 249 to 267 (SDLE…EGDV) and 278 to 293 (AQSE…EQGE). Residues 307 to 310 (RVRF) carry the Required for efficient binding to PPP1CA and for targeting PPP1CA to the nucleolus motif. Residues 312 to 325 (EDEEKSENSSEDGD) are compositionally biased toward acidic residues. Residues S317, S320, and S321 each carry the phosphoserine modification. The region spanning 362-559 (KKHVKGLLNR…ETMLALKNND (198 aa)) is the MIF4G domain. Residues 654–770 (DIRRNIFCTI…SLSILKVVEF (117 aa)) form the MI domain.

The protein belongs to the CWC22 family. May interact with EIF4A1, EIF4A2 and EIF4A3. Interacts with PPP1CA and PPP1CC. As to expression, expressed in heart and skeletal muscle.

The protein resides in the nucleus. It localises to the nucleolus. Plays a role in targeting PPP1CA to the nucleolus. This Homo sapiens (Human) protein is Nucleolar MIF4G domain-containing protein 1 (NOM1).